Here is a 1009-residue protein sequence, read N- to C-terminus: MDVDSRMTTESDSDSDAAAQGGGGGGFGSETSSASPSAPGTPTAMGAGGGAAPIAAAAIAAAASAAVVAGPRPAPGYTVVNAAMEKKEDGPGCRCGHTLTAVPAVGEEGAPGYVGPRLILFGGATALEGNSATPPSSAGSAGIRLAGATADVHCYDVSSNKWSRLTPVGEPPSPRAAHVATAVGTMVVIQGGIGPAGLSAEDLHVLDLTQQRPRWHRVVVQGPGPGPRYGHVMALVGQRFLLTIGGNDGKRPLADVWALDTAAKPYEWRKLEPEGEGPPPCMYATASARSDGLLLLCGGRDANSVPLASAYGLAKHRDGRWEWAIAPGVSPSPRYQHAAVFVNARLHVSGGALGGGRMVEDSSSVAVLDTAAGVWCDTKSVVTTPRTGRYSADAAGGDASVELTRRCRHAAAAVGDMIYVYGGLRGGVLLDDLLVAEDLAAAETTNAANQAAAIAAASDIQAGREPGRYAYNDEQTGQPATITSPDGAVVLGTPVAAPVNGDMYTDISPENAVIQGQRRMSKGVDYLVEASAAEAEAISATLAAVKARQVNGEAEHSPDREQSPDATPSVKQNASLIKPDYALSNNSTPPPGVRLHHRAVVVAAETGGALGGMVRQLSIDQFENEGRRVIYGTPESATAARKLLDRQMSINSVPKKVIASLLKPRGWKPPVRRQFFLDCNEIADLCDSAERIFSSEPSVLQLKAPIKIFGDLHGQFGDLMRLFDEYGAPSTAGDIAYIDYLFLGDYVDRGQHSLETITLLLALKVEYPLNVHLIRGNHEAADINALFGFRIECIERMGERDGIWTWHRMNRLFNWLPLAALIEKKIICMHGGIGRSINHVEQIENLQRPITMEAGSVVLMDLLWSDPTENDSVEGLRPNARGPGLVTFGPDRVMEFCNNNDLQLIVRAHECVMDGFERFAQGHLITLFSATNYCGTANNAGAILVLGRDLVVVPKLIHPLPPAITSPETSPEHHLEDTWMQELNANRPPTPTRGRPQAANNDRGSLAWI.

The interval 1–48 (MDVDSRMTTESDSDSDAAAQGGGGGGFGSETSSASPSAPGTPTAMGAG) is disordered. Residues 29–45 (SETSSASPSAPGTPTAM) are compositionally biased toward low complexity. 5 Kelch repeats span residues 136–182 (SSAG…VATA), 240–288 (FLLT…TASA), 293–344 (LLLL…FVNA), 349–396 (SGGA…DAAG), and 417–463 (MIYV…IQAG). The interval 549–572 (QVNGEAEHSPDREQSPDATPSVKQ) is disordered. The segment covering 553–563 (EAEHSPDREQS) has biased composition (basic and acidic residues). Mn(2+) is bound by residues Asp711, His713, Asp745, and Asn777. His778 acts as the Proton donor in catalysis. Residues His830 and His909 each coordinate Mn(2+). A disordered region spans residues 984–1009 (NANRPPTPTRGRPQAANNDRGSLAWI).

It belongs to the PPP phosphatase family. BSU subfamily. It depends on Mn(2+) as a cofactor.

Its subcellular location is the nucleus. It carries out the reaction O-phospho-L-seryl-[protein] + H2O = L-seryl-[protein] + phosphate. The enzyme catalyses O-phospho-L-threonyl-[protein] + H2O = L-threonyl-[protein] + phosphate. The protein is Serine/threonine-protein phosphatase BSL2 homolog (BSL2) of Oryza sativa subsp. japonica (Rice).